The sequence spans 70 residues: Beta-defensin 107 (70 aa).

The first 26 residues, 1–26, serve as a signal peptide directing secretion; that stretch reads MPGAMKIFVFILAALILLAQIFQART. Intrachain disulfides connect Cys-41–Cys-55 and Cys-45–Cys-64.

This sequence belongs to the beta-defensin family. In terms of tissue distribution, specifically expressed in testis.

It is found in the secreted. Its function is as follows. Has antibacterial activity. This chain is Beta-defensin 107 (DEFB107A), found in Homo sapiens (Human).